We begin with the raw amino-acid sequence, 348 residues long: MMEEQLIPIQWKDDALVLLDQTLLPNEIVYESFKTAESVWDAIQVMKVRGAPVIGVSAAYGVYLGVKEFAESTEEGFMDEVRKVCTYLATSRPTAVNLFWALERMESVAADNIHLSISQLKDRLLEEAKEIHREDEEINRQIGEHALTLFHDGMGVLTHCNAGALATTKYGTATAPMYLAKEKGWDLKIFSDETRPRLQGSTLTALELQRAGIDVTVITDNMAAMVMSQGKIDAVIVGCDRVAANGDIANKIGTLGVSILAKYYNIPFYVAAPTPTIDLKTPTGKEIPIEERDASEVINRFGQYSAPKESKVYNPAFDVTPHENVTAIITEKGIVKAPFTENLKKIFQ.

Substrate is bound by residues 49 to 51 (RGA), R92, and Q199. Catalysis depends on D240, which acts as the Proton donor. 250 to 251 (NK) is a binding site for substrate.

Belongs to the EIF-2B alpha/beta/delta subunits family. DrdI subfamily. Homodimer.

The catalysed reaction is 5-deoxy-alpha-D-ribose 1-phosphate = 5-deoxy-D-ribulose 1-phosphate. The enzyme catalyses 5-(methylsulfanyl)-alpha-D-ribose 1-phosphate = 5-(methylsulfanyl)-D-ribulose 1-phosphate. Its pathway is carbohydrate degradation. Its function is as follows. Catalyzes the isomerization of 5-deoxy-alpha-D-ribose 1-phosphate to 5-deoxy-D-ribulose 1-phosphate, as part of a 5-deoxyribose salvage pathway that recycles this toxic radical SAM enzyme by-product to mainstream metabolites. Also seems to be able to catalyze the conversion of methylthioribose-1-phosphate (MTR-1-P) into methylthioribulose-1-phosphate (MTRu-1-P). However this enzyme may not function in methionine salvage in B.thuringiensis since it exists a paralog (MtnA) present in the methionine salvage pathway cluster. This Bacillus thuringiensis serovar kurstaki (strain ATCC 35866 / NRRL B-4488 / HD73) protein is 5-deoxyribose 1-phosphate isomerase.